The primary structure comprises 612 residues: Dihydroxy-acid dehydratase (612 aa).

Asp81 contacts Mg(2+). Cys122 is a [2Fe-2S] cluster binding site. Asp123 and Lys124 together coordinate Mg(2+). Position 124 is an N6-carboxylysine (Lys124). [2Fe-2S] cluster is bound at residue Cys195. Glu491 lines the Mg(2+) pocket. The Proton acceptor role is filled by Ser517.

This sequence belongs to the IlvD/Edd family. As to quaternary structure, homodimer. [2Fe-2S] cluster is required as a cofactor. Mg(2+) serves as cofactor.

The catalysed reaction is (2R)-2,3-dihydroxy-3-methylbutanoate = 3-methyl-2-oxobutanoate + H2O. The enzyme catalyses (2R,3R)-2,3-dihydroxy-3-methylpentanoate = (S)-3-methyl-2-oxopentanoate + H2O. It participates in amino-acid biosynthesis; L-isoleucine biosynthesis; L-isoleucine from 2-oxobutanoate: step 3/4. The protein operates within amino-acid biosynthesis; L-valine biosynthesis; L-valine from pyruvate: step 3/4. Its function is as follows. Functions in the biosynthesis of branched-chain amino acids. Catalyzes the dehydration of (2R,3R)-2,3-dihydroxy-3-methylpentanoate (2,3-dihydroxy-3-methylvalerate) into 2-oxo-3-methylpentanoate (2-oxo-3-methylvalerate) and of (2R)-2,3-dihydroxy-3-methylbutanoate (2,3-dihydroxyisovalerate) into 2-oxo-3-methylbutanoate (2-oxoisovalerate), the penultimate precursor to L-isoleucine and L-valine, respectively. This is Dihydroxy-acid dehydratase from Rhizobium etli (strain CIAT 652).